Reading from the N-terminus, the 480-residue chain is 2-phosphoxylose phosphatase 1 (480 aa).

Over 1–6 (MLHRNR) the chain is Cytoplasmic. Residues 7–27 (FLVLLALAGLLAFLSLSLQFF) traverse the membrane as a helical; Signal-anchor for type II membrane protein segment. The Lumenal portion of the chain corresponds to 28–480 (HLIPVSATKN…YYDACHGEGA (453 aa)). His97 serves as the catalytic Nucleophile. N-linked (GlcNAc...) asparagine glycans are attached at residues Asn194, Asn305, and Asn354. Asp379 serves as the catalytic Proton donor.

This sequence belongs to the histidine acid phosphatase family. In terms of assembly, interacts with B3GAT3; the interaction increases the 2-phosphoxylose phosphatase activity of PXYLP1 during completion of linkage region formation in a B3GAT3-mediated manner.

The protein localises to the golgi apparatus membrane. The enzyme catalyses 3-O-[beta-D-GlcA-(1-&gt;3)-beta-D-Gal-(1-&gt;3)-beta-D-Gal-(1-&gt;4)-beta-D-2-O-P-Xyl]-L-seryl-[protein] + H2O = 3-O-(beta-D-GlcA-(1-&gt;3)-beta-D-Gal-(1-&gt;3)-beta-D-Gal-(1-&gt;4)-beta-D-Xyl)-L-seryl-[protein] + phosphate. Functionally, responsible for the 2-O-dephosphorylation of xylose in the glycosaminoglycan-protein linkage region of proteoglycans thereby regulating the amount of mature glycosaminoglycan (GAG) chains. Sulfated glycosaminoglycans (GAGs), including heparan sulfate and chondroitin sulfate, are synthesized on the so-called common GAG-protein linkage region (GlcUAbeta1-3Galbeta1-3Galbeta1-4Xylbeta1-O-Ser) of core proteins, which is formed by the stepwise addition of monosaccharide residues by the respective specific glycosyltransferases. Xylose 2-O-dephosphorylation during completion of linkage region formation is a prerequisite for the initiation and efficient elongation of the repeating disaccharide region of GAG chains. This is 2-phosphoxylose phosphatase 1 from Mus musculus (Mouse).